We begin with the raw amino-acid sequence, 197 residues long: MAGRRQGTVERITSETKIMADLTVDGEGKAELRTGVPFLDHMLSLFSVHGFFDLKLQAEGDLDVDAHHTVEDIGICLGGALAKALGDRKGIRRYGHAVVPMDEACASVTLDLSNRPFLVYRVPTLAARVGRFETELVPEFFRAFCQHGGATVHVQGLYGSNTHHILEAIFKALGRALDQATRFDERRSGIPSSKGTL.

The protein belongs to the imidazoleglycerol-phosphate dehydratase family.

It is found in the cytoplasm. The enzyme catalyses D-erythro-1-(imidazol-4-yl)glycerol 3-phosphate = 3-(imidazol-4-yl)-2-oxopropyl phosphate + H2O. It participates in amino-acid biosynthesis; L-histidine biosynthesis; L-histidine from 5-phospho-alpha-D-ribose 1-diphosphate: step 6/9. The protein is Imidazoleglycerol-phosphate dehydratase of Syntrophobacter fumaroxidans (strain DSM 10017 / MPOB).